A 344-amino-acid chain; its full sequence is Arginine N-succinyltransferase (344 aa).

L125 lines the succinyl-CoA pocket. Catalysis depends on H229, which acts as the Proton donor.

It belongs to the arginine N-succinyltransferase family.

It catalyses the reaction succinyl-CoA + L-arginine = N(2)-succinyl-L-arginine + CoA + H(+). The protein operates within amino-acid degradation; L-arginine degradation via AST pathway; L-glutamate and succinate from L-arginine: step 1/5. Its function is as follows. Catalyzes the transfer of succinyl-CoA to arginine to produce N(2)-succinylarginine. In Salmonella dublin (strain CT_02021853), this protein is Arginine N-succinyltransferase.